The sequence spans 301 residues: Pseudouridine-5'-phosphate glycosidase (301 aa).

Glutamate 25 (proton donor) is an active-site residue. 2 residues coordinate substrate: lysine 86 and valine 106. Aspartate 138 serves as a coordination point for Mn(2+). 140–142 (SAD) provides a ligand contact to substrate. Lysine 159 serves as the catalytic Nucleophile.

This sequence belongs to the pseudouridine-5'-phosphate glycosidase family. As to quaternary structure, homotrimer. The cofactor is Mn(2+).

It catalyses the reaction D-ribose 5-phosphate + uracil = psi-UMP + H2O. Catalyzes the reversible cleavage of pseudouridine 5'-phosphate (PsiMP) to ribose 5-phosphate and uracil. Functions biologically in the cleavage direction, as part of a pseudouridine degradation pathway. The polypeptide is Pseudouridine-5'-phosphate glycosidase (Geobacillus kaustophilus (strain HTA426)).